The chain runs to 145 residues: D-aminoacyl-tRNA deacylase (145 aa).

Residues glycine 137–proline 138 carry the Gly-cisPro motif, important for rejection of L-amino acids motif.

It belongs to the DTD family. Homodimer.

The protein resides in the cytoplasm. The catalysed reaction is glycyl-tRNA(Ala) + H2O = tRNA(Ala) + glycine + H(+). The enzyme catalyses a D-aminoacyl-tRNA + H2O = a tRNA + a D-alpha-amino acid + H(+). An aminoacyl-tRNA editing enzyme that deacylates mischarged D-aminoacyl-tRNAs. Also deacylates mischarged glycyl-tRNA(Ala), protecting cells against glycine mischarging by AlaRS. Acts via tRNA-based rather than protein-based catalysis; rejects L-amino acids rather than detecting D-amino acids in the active site. By recycling D-aminoacyl-tRNA to D-amino acids and free tRNA molecules, this enzyme counteracts the toxicity associated with the formation of D-aminoacyl-tRNA entities in vivo and helps enforce protein L-homochirality. In Lactobacillus delbrueckii subsp. bulgaricus (strain ATCC 11842 / DSM 20081 / BCRC 10696 / JCM 1002 / NBRC 13953 / NCIMB 11778 / NCTC 12712 / WDCM 00102 / Lb 14), this protein is D-aminoacyl-tRNA deacylase.